Reading from the N-terminus, the 460-residue chain is ATP synthase subunit beta (460 aa).

149–156 is a binding site for ATP; it reads GGAGVGKT.

The protein belongs to the ATPase alpha/beta chains family. As to quaternary structure, F-type ATPases have 2 components, CF(1) - the catalytic core - and CF(0) - the membrane proton channel. CF(1) has five subunits: alpha(3), beta(3), gamma(1), delta(1), epsilon(1). CF(0) has three main subunits: a(1), b(2) and c(9-12). The alpha and beta chains form an alternating ring which encloses part of the gamma chain. CF(1) is attached to CF(0) by a central stalk formed by the gamma and epsilon chains, while a peripheral stalk is formed by the delta and b chains.

It is found in the cell inner membrane. It carries out the reaction ATP + H2O + 4 H(+)(in) = ADP + phosphate + 5 H(+)(out). Produces ATP from ADP in the presence of a proton gradient across the membrane. The catalytic sites are hosted primarily by the beta subunits. This Nitrosomonas europaea (strain ATCC 19718 / CIP 103999 / KCTC 2705 / NBRC 14298) protein is ATP synthase subunit beta.